Consider the following 190-residue polypeptide: Large ribosomal subunit protein uL10 (190 aa).

The segment at 170-190 (AAGAPAEAAPVEAPAAETVDA) is disordered.

It belongs to the universal ribosomal protein uL10 family. As to quaternary structure, part of the ribosomal stalk of the 50S ribosomal subunit. The N-terminus interacts with L11 and the large rRNA to form the base of the stalk. The C-terminus forms an elongated spine to which L12 dimers bind in a sequential fashion forming a multimeric L10(L12)X complex.

In terms of biological role, forms part of the ribosomal stalk, playing a central role in the interaction of the ribosome with GTP-bound translation factors. The protein is Large ribosomal subunit protein uL10 of Kineococcus radiotolerans (strain ATCC BAA-149 / DSM 14245 / SRS30216).